The sequence spans 287 residues: Acetylglutamate kinase (287 aa).

Substrate contacts are provided by residues 70–71 (GG), Arg92, and Asn184.

This sequence belongs to the acetylglutamate kinase family. ArgB subfamily.

The protein localises to the cytoplasm. It catalyses the reaction N-acetyl-L-glutamate + ATP = N-acetyl-L-glutamyl 5-phosphate + ADP. Its pathway is amino-acid biosynthesis; L-arginine biosynthesis; N(2)-acetyl-L-ornithine from L-glutamate: step 2/4. Functionally, catalyzes the ATP-dependent phosphorylation of N-acetyl-L-glutamate. The polypeptide is Acetylglutamate kinase (Dinoroseobacter shibae (strain DSM 16493 / NCIMB 14021 / DFL 12)).